Reading from the N-terminus, the 315-residue chain is Methionyl-tRNA formyltransferase (315 aa).

A (6S)-5,6,7,8-tetrahydrofolate-binding site is contributed by 113–116; that stretch reads SLLP.

The protein belongs to the Fmt family.

The enzyme catalyses L-methionyl-tRNA(fMet) + (6R)-10-formyltetrahydrofolate = N-formyl-L-methionyl-tRNA(fMet) + (6S)-5,6,7,8-tetrahydrofolate + H(+). Attaches a formyl group to the free amino group of methionyl-tRNA(fMet). The formyl group appears to play a dual role in the initiator identity of N-formylmethionyl-tRNA by promoting its recognition by IF2 and preventing the misappropriation of this tRNA by the elongation apparatus. This Shigella flexneri serotype 5b (strain 8401) protein is Methionyl-tRNA formyltransferase.